The sequence spans 1109 residues: Cation channel sperm-associated auxiliary subunit beta (1109 aa).

The Extracellular portion of the chain corresponds to 1–1055 (MESPLIYVML…QIYVDEVPLP (1055 aa)). A disulfide bond links Cys-35 and Cys-60. 3 N-linked (GlcNAc...) asparagine glycosylation sites follow: Asn-66, Asn-90, and Asn-118. Cys-189 and Cys-302 are oxidised to a cystine. The N-linked (GlcNAc...) asparagine glycan is linked to Asn-321. Cys-330 and Cys-343 form a disulfide bridge. The N-linked (GlcNAc...) asparagine glycan is linked to Asn-672. 4 disulfide bridges follow: Cys-720-Cys-818, Cys-831-Cys-1039, Cys-913-Cys-922, and Cys-924-Cys-939. Residues Asn-915 and Asn-923 are each glycosylated (N-linked (GlcNAc...) asparagine). An N-linked (GlcNAc...) asparagine glycan is attached at Asn-1017. The chain crosses the membrane as a helical span at residues 1056–1078 (FPGHALIAVATSVVLGVLIFIAF). Topologically, residues 1079–1109 (VFQLRNIHPLKALKKSIRGNPGLTSSTTVSS) are cytoplasmic.

In terms of assembly, component of the CatSper complex or CatSpermasome composed of the core pore-forming members CATSPER1, CATSPER2, CATSPER3 and CATSPER4 as well as auxiliary members CATSPERB, CATSPERG2, CATSPERD, CATSPERE, CATSPERZ, C2CD6/CATSPERT, SLCO6C1, TMEM249, TMEM262 and EFCAB9. HSPA1 may be an additional auxiliary complex member. The core complex members CATSPER1, CATSPER2, CATSPER3 and CATSPER4 form a heterotetrameric channel. The auxiliary CATSPERB, CATSPERG2, CATSPERD and CATSPERE subunits form a pavilion-like structure over the pore which stabilizes the complex through interactions with CATSPER4, CATSPER3, CATSPER1 and CATSPER2 respectively. SLCO6C1 interacts with CATSPERE and TMEM262/CATSPERH interacts with CATSPERB, further stabilizing the complex. C2CD6/CATSPERT interacts at least with CATSPERD and is required for targeting the CatSper complex in the flagellar membrane. As to expression, testis-specific. Specifically present in the principal piece of sperm tail (at protein level). Specifically expressed in the seminiferous tubules but not in the interstitial cells. Within the tubules, it is expressed in spermatocytes and spermatids, but not in spermatogonia.

The protein localises to the cell projection. The protein resides in the cilium. Its subcellular location is the flagellum membrane. Functionally, auxiliary component of the CatSper complex, a complex involved in sperm cell hyperactivation. Sperm cell hyperactivation is needed for sperm motility which is essential late in the preparation of sperm for fertilization. This chain is Cation channel sperm-associated auxiliary subunit beta, found in Mus musculus (Mouse).